The following is a 98-amino-acid chain: MELKMNLQLFAQKKGTGSSKNGRDSISKRLGVKRHGGQQVNAGNIIVRQRGTKFHPGENVGIGKDDTLFAKADGVVTFEQVGKKKKRVCVYPEPAMAE.

Positions 1–10 are excised as a propeptide; that stretch reads MELKMNLQLF. The tract at residues 11–30 is disordered; that stretch reads AQKKGTGSSKNGRDSISKRL.

Belongs to the bacterial ribosomal protein bL27 family. In terms of processing, the N-terminus is cleaved by ribosomal processing cysteine protease Prp.

This chain is Large ribosomal subunit protein bL27, found in Natranaerobius thermophilus (strain ATCC BAA-1301 / DSM 18059 / JW/NM-WN-LF).